A 35-amino-acid chain; its full sequence is Coatomer subunit alpha (35 aa).

As to quaternary structure, oligomeric complex that consists of at least the alpha, beta, beta', gamma, delta, epsilon and zeta subunits. Interacts with SCYL1. Interacts with JAGN1. Interacts with TMEM41B. Interacts with SVEP1. Probably interacts with PEX11A. Gastric, duodenal and jejunal mucosa. Circulates in the blood. Seems to be confined to specific endocrine cells.

Functionally, xenin stimulates exocrine pancreatic secretion. It inhibits pentagastrin-stimulated secretion of acid, to induce exocrine pancreatic secretion and to affect small and large intestinal motility. In the gut, xenin interacts with the neurotensin receptor. The protein is Coatomer subunit alpha (COPA) of Canis lupus familiaris (Dog).